We begin with the raw amino-acid sequence, 651 residues long: Acetyl-coenzyme A synthetase (651 aa).

Residues 189–192, Thr311, and Asn335 each bind CoA; that span reads RGGK. Residues 387–389, 411–416, Asp500, and Arg515 contribute to the ATP site; these read GEP and DTWWQT. A CoA-binding site is contributed by Ser523. Arg526 lines the ATP pocket. The Mg(2+) site is built by Val537, His539, and Val542. Arg586 provides a ligand contact to CoA. Lys611 carries the N6-acetyllysine modification.

The protein belongs to the ATP-dependent AMP-binding enzyme family. Mg(2+) serves as cofactor. In terms of processing, acetylated. Deacetylation by the SIR2-homolog deacetylase activates the enzyme.

It catalyses the reaction acetate + ATP + CoA = acetyl-CoA + AMP + diphosphate. In terms of biological role, catalyzes the conversion of acetate into acetyl-CoA (AcCoA), an essential intermediate at the junction of anabolic and catabolic pathways. AcsA undergoes a two-step reaction. In the first half reaction, AcsA combines acetate with ATP to form acetyl-adenylate (AcAMP) intermediate. In the second half reaction, it can then transfer the acetyl group from AcAMP to the sulfhydryl group of CoA, forming the product AcCoA. This chain is Acetyl-coenzyme A synthetase, found in Brucella suis (strain ATCC 23445 / NCTC 10510).